The following is a 217-amino-acid chain: Phosphatidylinositol phosphate synthase (217 aa).

2 helical membrane passes run 28 to 49 (LTPDVVTILGTTASVAGALTLF) and 55 to 74 (FAGACVVWFFVLFDMLDGAM). 31–34 (DVVT) lines the a CDP-1,2-diacyl-sn-glycerol pocket. Mg(2+) is bound by residues Asp68 and Asp71. 3 residues coordinate a CDP-1,2-diacyl-sn-glycerol: Gly72, Arg76, and Thr82. Asp89 and Asp93 together coordinate Mg(2+). Catalysis depends on Asp93, which acts as the Proton acceptor. Transmembrane regions (helical) follow at residues 95–112 (ISDGAVFCGLLWWIAFHM), 118–136 (VIATLICLVTSQVISYIKA), 156–173 (LIIVLTGAGVSDFPFVPW), and 179–200 (VGMWLLAVASVITCVQRLHTVW).

Belongs to the CDP-alcohol phosphatidyltransferase class-I family. Homodimer. It depends on Mg(2+) as a cofactor.

It is found in the cell membrane. It catalyses the reaction a CDP-1,2-diacyl-sn-glycerol + 1D-myo-inositol 3-phosphate = a 1,2-diacyl-sn-glycero-3-phospho-(1D-myo-inositol-3-phosphate) + CMP + H(+). It carries out the reaction 1,2-di-(9Z-octadecenoyl)-sn-glycero-3-cytidine-5'-diphosphate + 1D-myo-inositol 3-phosphate = 1,2-di-(9Z-octadecenoyl)-sn-glycero-3-phospho-(1D-myo-inositol-3-phosphate) + CMP + H(+). Its pathway is phospholipid metabolism; phosphatidylinositol phosphate biosynthesis. Competitively inhibited by several inositol 1-phosphate analogs, including the phosphonate analog 1-deoxy-1-phosphonomethyl-myo-inositol (Ino-C-P). Its function is as follows. Catalyzes the conjugation of the 1'-hydroxyl group of D-myo-inositol-3-phosphate (also named L-myo-inositol-1-phosphate) with a lipid tail of cytidine diphosphate diacylglycerol (CDP-DAG), forming phosphatidylinositol phosphate (PIP) and CMP. PIP is a precursor of phosphatidylinositol (PI) which is an essential lipid for mycobacteria required for formation of their cell wall. This chain is Phosphatidylinositol phosphate synthase, found in Mycobacterium bovis (strain BCG / Pasteur 1173P2).